Consider the following 97-residue polypeptide: Small ribosomal subunit protein bS20 (97 aa).

This sequence belongs to the bacterial ribosomal protein bS20 family.

Its function is as follows. Binds directly to 16S ribosomal RNA. In Prochlorococcus marinus (strain MIT 9515), this protein is Small ribosomal subunit protein bS20.